We begin with the raw amino-acid sequence, 473 residues long: 3-isopropylmalate dehydratase large subunit (473 aa).

[4Fe-4S] cluster is bound by residues C355, C415, and C418. Positions 423-452 are disordered; the sequence is PDQLAPGERSASTSNRNFEGRQGKGGRTHL.

The protein belongs to the aconitase/IPM isomerase family. LeuC type 1 subfamily. As to quaternary structure, heterodimer of LeuC and LeuD. The cofactor is [4Fe-4S] cluster.

It catalyses the reaction (2R,3S)-3-isopropylmalate = (2S)-2-isopropylmalate. Its pathway is amino-acid biosynthesis; L-leucine biosynthesis; L-leucine from 3-methyl-2-oxobutanoate: step 2/4. Functionally, catalyzes the isomerization between 2-isopropylmalate and 3-isopropylmalate, via the formation of 2-isopropylmaleate. The sequence is that of 3-isopropylmalate dehydratase large subunit from Corynebacterium jeikeium (strain K411).